We begin with the raw amino-acid sequence, 252 residues long: Phosphate import ATP-binding protein PstB (252 aa).

The ABC transporter domain occupies 5-247 (MRGQDVKVFY…PKEQRTQDYI (243 aa)). 37–44 (GPSGCGKS) serves as a coordination point for ATP.

It belongs to the ABC transporter superfamily. Phosphate importer (TC 3.A.1.7) family. In terms of assembly, the complex is composed of two ATP-binding proteins (PstB), two transmembrane proteins (PstC and PstA) and a solute-binding protein (PstS).

It localises to the cell inner membrane. The enzyme catalyses phosphate(out) + ATP + H2O = ADP + 2 phosphate(in) + H(+). Part of the ABC transporter complex PstSACB involved in phosphate import. Responsible for energy coupling to the transport system. This Bartonella henselae (strain ATCC 49882 / DSM 28221 / CCUG 30454 / Houston 1) (Rochalimaea henselae) protein is Phosphate import ATP-binding protein PstB.